The chain runs to 355 residues: MSLFDTINAGGAQLLGIAWPTVWAIVRILVVAVVILLCVAYLILWERKLIGWMHVRLGPNRVGPAGLLQPIADVLKLLLKEVIQPSAASRWLYLIAPVMTVVPAFAVWAVIPFQAEAVLANVNAGLLYAMAISSIGVYAVILAGWASNSKYAFLGAMRAAAQMVSYEISMGFALVLVLMTAGSLNLSEIVGSQQHGFFAGHGVNFLSWNWLPLLPAFVVYFVSGIAETNRHPFDVVEGESEIVAGHMIDYSGMAFALFFLAEYINMIVISALAATLFLGGWDAPFEFLSFIPGVFWLVLKVFALLSVFIWVRATFPRYRYDQIMRLGWKVFLPVTVIWVVVVGFWMMSPLNIWVK.

8 helical membrane-spanning segments follow: residues 25–45 (IVRILVVAVVILLCVAYLILW), 91–111 (WLYLIAPVMTVVPAFAVWAVI), 126–146 (LLYAMAISSIGVYAVILAGWA), 170–190 (MGFALVLVLMTAGSLNLSEIV), 205–225 (FLSWNWLPLLPAFVVYFVSGI), 253–273 (MAFALFFLAEYINMIVISALA), 290–310 (FIPGVFWLVLKVFALLSVFIW), and 330–350 (VFLPVTVIWVVVVGFWMMSPL).

It belongs to the complex I subunit 1 family. In terms of assembly, NDH-1 is composed of 14 different subunits. Subunits NuoA, H, J, K, L, M, N constitute the membrane sector of the complex.

The protein localises to the cell inner membrane. It catalyses the reaction a quinone + NADH + 5 H(+)(in) = a quinol + NAD(+) + 4 H(+)(out). Its function is as follows. NDH-1 shuttles electrons from NADH, via FMN and iron-sulfur (Fe-S) centers, to quinones in the respiratory chain. The immediate electron acceptor for the enzyme in this species is believed to be ubiquinone. Couples the redox reaction to proton translocation (for every two electrons transferred, four hydrogen ions are translocated across the cytoplasmic membrane), and thus conserves the redox energy in a proton gradient. This subunit may bind ubiquinone. This chain is NADH-quinone oxidoreductase subunit H, found in Burkholderia ambifaria (strain MC40-6).